The chain runs to 326 residues: Trans-L-3-hydroxyproline dehydratase (326 aa).

Cys-80 acts as the Proton acceptor in catalysis. Substrate contacts are provided by residues 81–82 (GH), Asp-241, and 246–247 (GS).

The protein belongs to the proline racemase family. In terms of assembly, homodimer.

The catalysed reaction is trans-3-hydroxy-L-proline = 1-pyrroline-2-carboxylate + H2O. Functionally, catalyzes the dehydration of trans-3-hydroxy-L-proline to delta-1-pyrroline-2-carboxylate (Pyr2C). This is Trans-L-3-hydroxyproline dehydratase (l3hypdh) from Saccoglossus kowalevskii (Acorn worm).